We begin with the raw amino-acid sequence, 288 residues long: Pyridoxal kinase PdxY (288 aa).

Substrate contacts are provided by residues Ser-10 and Thr-45–Gln-46. Positions 112, 143, 148, and 181 each coordinate ATP. Asp-222 contacts substrate.

This sequence belongs to the pyridoxine kinase family. PdxY subfamily. As to quaternary structure, homodimer. It depends on Mg(2+) as a cofactor.

The enzyme catalyses pyridoxal + ATP = pyridoxal 5'-phosphate + ADP + H(+). Its pathway is cofactor metabolism; pyridoxal 5'-phosphate salvage; pyridoxal 5'-phosphate from pyridoxal: step 1/1. Its function is as follows. Pyridoxal kinase involved in the salvage pathway of pyridoxal 5'-phosphate (PLP). Catalyzes the phosphorylation of pyridoxal to PLP. This Paraburkholderia xenovorans (strain LB400) protein is Pyridoxal kinase PdxY.